The following is a 253-amino-acid chain: Putative enoyl-CoA hydratase (253 aa).

Residue Glu131 is part of the active site.

The protein belongs to the enoyl-CoA hydratase/isomerase family. In terms of assembly, homohexamer; dimer of trimers.

The enzyme catalyses a (3S)-3-hydroxyacyl-CoA = a (2E)-enoyl-CoA + H2O. The sequence is that of Putative enoyl-CoA hydratase from Thermus thermophilus (strain ATCC 27634 / DSM 579 / HB8).